The chain runs to 139 residues: Small ribosomal subunit protein uS11A (139 aa).

The disordered stretch occupies residues 119 to 139 (DVTPIPTDSTRRKGGRRGRRL). Residues 130 to 139 (RKGGRRGRRL) show a composition bias toward basic residues.

The protein belongs to the universal ribosomal protein uS11 family. As to quaternary structure, component of the small ribosomal subunit (SSU). Mature yeast ribosomes consist of a small (40S) and a large (60S) subunit. The 40S small subunit contains 1 molecule of ribosomal RNA (18S rRNA) and at least 33 different proteins. The large 60S subunit contains 3 rRNA molecules (25S, 5.8S and 5S rRNA) and at least 46 different proteins. uS11 interacts with eS1 forming part of the mRNA exit tunnel. uS11 interacts with snoRNA U3. uS11 interacts with MPP10. Component of the ribosomal small subunit (SSU) processome composed of at least 40 protein subunits and snoRNA U3.

The protein localises to the cytoplasm. It is found in the nucleus. The protein resides in the nucleolus. Component of the ribosome, a large ribonucleoprotein complex responsible for the synthesis of proteins in the cell. The small ribosomal subunit (SSU) binds messenger RNAs (mRNAs) and translates the encoded message by selecting cognate aminoacyl-transfer RNA (tRNA) molecules. The large subunit (LSU) contains the ribosomal catalytic site termed the peptidyl transferase center (PTC), which catalyzes the formation of peptide bonds, thereby polymerizing the amino acids delivered by tRNAs into a polypeptide chain. The nascent polypeptides leave the ribosome through a tunnel in the LSU and interact with protein factors that function in enzymatic processing, targeting, and the membrane insertion of nascent chains at the exit of the ribosomal tunnel. uS11 is involved in nucleolar processing of pre-18S ribosomal RNA and ribosome assembly. The chain is Small ribosomal subunit protein uS11A (rps1401) from Schizosaccharomyces pombe (strain 972 / ATCC 24843) (Fission yeast).